A 524-amino-acid chain; its full sequence is ORC1-type DNA replication protein 4 (524 aa).

The span at 1–23 shows a compositional bias: polar residues; that stretch reads MTDKSNNPAPASDPSTTETSNDA. The interval 1–67 is disordered; sequence MTDKSNNPAP…DDPSDEASRG (67 aa). ATP is bound by residues 128 to 132, tyrosine 325, and arginine 337; that span reads TGKTA.

Belongs to the CDC6/cdc18 family.

Its function is as follows. Involved in regulation of DNA replication. This is ORC1-type DNA replication protein 4 (cdc6d) from Haloarcula marismortui (strain ATCC 43049 / DSM 3752 / JCM 8966 / VKM B-1809) (Halobacterium marismortui).